We begin with the raw amino-acid sequence, 132 residues long: Acetylcholinesterase (132 aa).

N-linked (GlcNAc...) asparagine glycosylation is present at N37. C45 and C72 are joined by a disulfide.

The protein belongs to the type-B carboxylesterase/lipase family.

Its subcellular location is the synapse. The protein localises to the secreted. It is found in the cell membrane. The catalysed reaction is acetylcholine + H2O = choline + acetate + H(+). Its function is as follows. Rapidly hydrolyzes choline released into the synapse. The protein is Acetylcholinesterase (ACE-1) of Culex pipiens pipiens (Northern house mosquito).